The primary structure comprises 419 residues: Dynein regulatory complex protein 9 (419 aa).

Disordered regions lie at residues 1–47 (MEGE…SPEV) and 393–419 (SFKMPKKEKDDSKDAKGKEKDKRRGKK). Residues 34–44 (EELEEEEEETS) are compositionally biased toward acidic residues. The IQ domain occupies 371–400 (ELRSIVKLQAWWRGTVVRREIGSFKMPKKE).

Belongs to the DRC9 family. Component of the nexin-dynein regulatory complex (N-DRC). Interacts (via IQ domain) with CALM when calcium levels are low. Does not interact with CALM in the presence of Ca(2+). Interacts with the HSP70 proteins HSPA1L and HSPA8. May form a complex with CAMK4 and HSP70.

The protein resides in the cytoplasm. It localises to the cell projection. The protein localises to the cilium. Its subcellular location is the flagellum. It is found in the cytoskeleton. The protein resides in the flagellum axoneme. Its function is as follows. Component of the nexin-dynein regulatory complex (N-DRC), a key regulator of ciliary/flagellar motility which maintains the alignment and integrity of the distal axoneme and regulates microtubule sliding in motile axonemes. Binds calmodulin when cellular Ca(2+) levels are low and thereby contributes to the regulation of calcium and calmodulin-dependent protein kinase IV (CAMK4) activity; contributes to the regulation of CAMK4 signaling cascades. Required for normal axoneme assembly in sperm flagella, normal sperm tail formation and for male fertility. This chain is Dynein regulatory complex protein 9 (Iqcg), found in Rattus norvegicus (Rat).